Here is a 267-residue protein sequence, read N- to C-terminus: Octanoyltransferase (267 aa).

A disordered region spans residues 1 to 30 (MPTGKLRQKPPYAAIMTNSPVTPSTETQQP). Over residues 16–28 (MTNSPVTPSTETQ) the composition is skewed to polar residues. One can recognise a BPL/LPL catalytic domain in the interval 77-265 (GTASELVWLV…AFESVFGPRQ (189 aa)). Residues 116-123 (RGGEYTYH), 196-198 (AIG), and 209-211 (GIA) contribute to the substrate site. Residue C227 is the Acyl-thioester intermediate of the active site.

This sequence belongs to the LipB family.

The protein resides in the cytoplasm. It catalyses the reaction octanoyl-[ACP] + L-lysyl-[protein] = N(6)-octanoyl-L-lysyl-[protein] + holo-[ACP] + H(+). It functions in the pathway protein modification; protein lipoylation via endogenous pathway; protein N(6)-(lipoyl)lysine from octanoyl-[acyl-carrier-protein]: step 1/2. In terms of biological role, catalyzes the transfer of endogenously produced octanoic acid from octanoyl-acyl-carrier-protein onto the lipoyl domains of lipoate-dependent enzymes. Lipoyl-ACP can also act as a substrate although octanoyl-ACP is likely to be the physiological substrate. The polypeptide is Octanoyltransferase (Brucella abortus biovar 1 (strain 9-941)).